The sequence spans 329 residues: uncharacterized protein (329 aa).

The SIS domain occupies 37-180; sequence LAEKILGHSG…AMLLFHSRGV (144 aa). 52–57 contributes to the ATP binding site; sequence GVGKSG. CBS domains follow at residues 206 to 265 and 274 to 329; these read MFPK…GGEV and MTAN…AGLL.

This sequence belongs to the SIS family. GutQ/KpsF subfamily.

This is an uncharacterized protein from Chlamydia pneumoniae (Chlamydophila pneumoniae).